We begin with the raw amino-acid sequence, 173 residues long: MSLNLEEKKAVVAEVAAQVAAAQTVVVAEYRGIAVEDMTQLRVKARKEGVYLRVLKNTLVRRAVADTPFAGIADQLVGPLAYGISKDPVAAAKVMHEFSKTNDKFVVKAGAMPNFLMSPKDVGNLASMPSREELLSKLLGTMQAPIAQFVRTLNEVPTKFVRGLAAVRDKQAA.

It belongs to the universal ribosomal protein uL10 family. As to quaternary structure, part of the ribosomal stalk of the 50S ribosomal subunit. The N-terminus interacts with L11 and the large rRNA to form the base of the stalk. The C-terminus forms an elongated spine to which L12 dimers bind in a sequential fashion forming a multimeric L10(L12)X complex.

In terms of biological role, forms part of the ribosomal stalk, playing a central role in the interaction of the ribosome with GTP-bound translation factors. This chain is Large ribosomal subunit protein uL10, found in Thiobacillus denitrificans (strain ATCC 25259 / T1).